We begin with the raw amino-acid sequence, 170 residues long: Elicitin-like protein 1 (170 aa).

The N-terminal stretch at M1–G19 is a signal peptide. Disulfide bonds link C25–C91, C47–C76, and C71–C118. Positions G122–C170 are disordered. Residues T126 to S162 show a composition bias toward low complexity.

Belongs to the elicitin family.

It is found in the secreted. Its function is as follows. Induces local and distal defense responses (incompatible hypersensitive reaction) in plants from the solanaceae and cruciferae families. Elicits leaf necrosis and causes the accumulation of pathogenesis-related proteins. Might interact with the lipidic molecules of the plasma membrane. This Pythium oligandrum (Mycoparasitic fungus) protein is Elicitin-like protein 1 (POD-1).